The following is a 343-amino-acid chain: T-cell immunoglobulin and mucin domain-containing protein 4 (343 aa).

A signal peptide spans 1–22 (MSKGLLLLWLVTELWWLYLTPA). An Ig-like V-type domain is found at 23 to 128 (ASEDTIIGFL…WFNDVKKNVR (106 aa)). Residues 23–279 (ASEDTIIGFL…KSHQINSRQT (257 aa)) lie on the Extracellular side of the membrane. 3 disulfide bridges follow: Cys40-Cys112, Cys53-Cys64, and Cys59-Cys111. Asn220 carries N-linked (GlcNAc...) asparagine glycosylation. The interval 239–258 (TGSNPGILPSTSQLTTQKTT) is disordered. The segment covering 248–258 (STSQLTTQKTT) has biased composition (low complexity). A helical membrane pass occupies residues 280–300 (ILIIACCVGFVLMVLLFLAFL). The Cytoplasmic portion of the chain corresponds to 301–343 (LRGKVTGANCLQRHKRPDNTEDSDSVLNDMSHGRDDEDGIFTL). The segment at 313-343 (RHKRPDNTEDSDSVLNDMSHGRDDEDGIFTL) is disordered. A phosphoserine mark is found at Ser323, Ser325, and Ser331.

It belongs to the immunoglobulin superfamily. TIM family. In terms of assembly, homodimer. Predominantly expressed in lymphoid tissues, such as spleen, lymph nodes, and Peyer patches. Also expressed in fetal liver, salivary gland, and spleen stromal cells, predominantly in the marginal zone and to a lesser extent throughout the white pulp. Not expressed in bone marrow-derived cells. Expressed mainly by antigen presenting cells (APCs) in T- and B-cell areas, but not by T- or B-lymphocytes.

The protein localises to the membrane. Phosphatidylserine receptor that plays different role in immune response including phagocytosis of apoptotic cells and T-cell regulation. Controls T-cell activation in a bimodal fashion, decreasing the activation of naive T-cells by inducing cell cycle arrest, while increasing proliferation of activated T-cells by activating AKT1 and ERK1/2 phosphorylations and subsequent signaling pathways. Also plays a role in efferocytosis which is the process by which apoptotic cells are removed by phagocytic cells. Mechanistically, promotes the engulfment of apoptotic cells or exogenous particles by securing them to phagocytes through direct binding to phosphatidylserine present on apoptotic cells, while other engulfment receptors such as MERTK efficiently recognize apoptotic cells and mediate their ingestion. Additionally, promotes autophagy process by suppressing NLRP3 inflammasome activity via activation of STK11/PRKAA1 pathway in a phosphatidylserine-dependent mechanism. The protein is T-cell immunoglobulin and mucin domain-containing protein 4 (Timd4) of Mus musculus (Mouse).